Reading from the N-terminus, the 372-residue chain is GDSL esterase/lipase At1g54020 (372 aa).

A signal peptide spans 1 to 26 (MECSSVSVLGILLVFPLLHNLVTISG). The active-site Nucleophile is serine 40. Asparagine 161 and asparagine 280 each carry an N-linked (GlcNAc...) asparagine glycan. Catalysis depends on residues aspartate 314 and histidine 317.

Belongs to the 'GDSL' lipolytic enzyme family.

The protein localises to the secreted. The protein is GDSL esterase/lipase At1g54020 of Arabidopsis thaliana (Mouse-ear cress).